Consider the following 978-residue polypeptide: LRR receptor-like serine/threonine-protein kinase ER1 (978 aa).

The signal sequence occupies residues 1–24 (MTPAPAAASYRALVALLLVAVAVA). Over 25–577 (DDGSTLLEIK…GHQQKPLISK (553 aa)) the chain is Extracellular. 2 N-linked (GlcNAc...) asparagine glycosylation sites follow: N62 and N71. 20 LRR repeats span residues 66–87 (AVAALNLSGLNLGGEISPAVGR), 88–112 (LKGIVSIDLKSNGLSGQIPDEIGDC), 114–136 (SLKTLDLSFNSLDGDIPFSVSKL), 137–159 (KHIESLILKNNQLIGVIPSTLSQ), 160–184 (LPNLKILDLAQNKLSGEIPRLIYWN), 186–208 (VLQYLGLRGNNLEGSISPDICQL), 209–232 (TGLWYFDVKNNSLTGPIPETIGNC), 233–257 (TSFQVLDLSYNKLSGSIPFNIGFLQ), 259–278 (ATLSLQGNMFTGPIPSVIGL), 279–302 (MQALAVLDLSYNQLSGPIPSILGN), 304–327 (TYTEKLYMQGNKLTGPIPPELGNM), 328–350 (STLHYLELNDNQLSGFIPPEFGK), 352–375 (TGLFDLNLANNNFEGPIPDNISSC), 377–399 (NLNSFNAYGNRLNGTIPPSLHKL), 400–423 (ESMTYLNLSSNFLSGSIPIELSRI), 424–447 (NNLDTLDLSCNMITGPIPSTIGSL), 449–470 (HLLRLNLSNNGLVGFIPAEIGN), 471–494 (LRSIMEIDMSNNHLGGLIPQELGM), 496–518 (QNLMLLNLKNNNITGDVSSLMNC), and 519–543 (FSLNILNVSYNNLAGVVPTDNNFSR). N-linked (GlcNAc...) asparagine glycans are attached at residues N218 and N231. N-linked (GlcNAc...) asparagine glycans are attached at residues N302 and N326. N-linked (GlcNAc...) asparagine glycosylation is found at N371, N389, and N406. A glycan (N-linked (GlcNAc...) asparagine) is linked at N454. Residues N507, N525, and N540 are each glycosylated (N-linked (GlcNAc...) asparagine). Residues 578-598 (AAILGIAVGGLVILLMILVAV) traverse the membrane as a helical segment. Topologically, residues 599–978 (CRPHSPPVFK…FGEVISQNTE (380 aa)) are cytoplasmic. Positions 645-916 (LSEKYIIGYG…EVVRVLDCLV (272 aa)) constitute a Protein kinase domain. ATP is bound by residues 651–659 (IGYGASSTV) and K673. Residue D771 is the Proton acceptor of the active site.

The protein belongs to the protein kinase superfamily. Ser/Thr protein kinase family.

The protein localises to the cell membrane. It carries out the reaction L-seryl-[protein] + ATP = O-phospho-L-seryl-[protein] + ADP + H(+). It catalyses the reaction L-threonyl-[protein] + ATP = O-phospho-L-threonyl-[protein] + ADP + H(+). Functionally, receptor kinase involved in the regulation of thermotolerance. Functions as a positive regulator of heat tolerance. May be involved in the regulation of cell proliferation and cell growth. The sequence is that of LRR receptor-like serine/threonine-protein kinase ER1 from Oryza sativa subsp. japonica (Rice).